We begin with the raw amino-acid sequence, 522 residues long: 3-octaprenyl-4-hydroxybenzoate carboxy-lyase (522 aa).

Residue asparagine 181 participates in Mn(2+) binding. Residues isoleucine 184–arginine 186, arginine 198–leucine 200, and arginine 203–glycine 204 contribute to the prenylated FMN site. Glutamate 247 lines the Mn(2+) pocket. Aspartate 322 functions as the Proton donor in the catalytic mechanism.

It belongs to the UbiD family. As to quaternary structure, homohexamer. The cofactor is prenylated FMN. Mn(2+) is required as a cofactor.

It is found in the cell membrane. The enzyme catalyses a 4-hydroxy-3-(all-trans-polyprenyl)benzoate + H(+) = a 2-(all-trans-polyprenyl)phenol + CO2. The protein operates within cofactor biosynthesis; ubiquinone biosynthesis. Catalyzes the decarboxylation of 3-octaprenyl-4-hydroxy benzoate to 2-octaprenylphenol, an intermediate step in ubiquinone biosynthesis. The protein is 3-octaprenyl-4-hydroxybenzoate carboxy-lyase of Paraburkholderia xenovorans (strain LB400).